Reading from the N-terminus, the 532-residue chain is FAD-dependent monooxygenase hkm7 (532 aa).

FAD contacts are provided by residues 191–193 and aspartate 261; that span reads RIY.

It belongs to the PheA/TfdB FAD monooxygenase family.

It participates in secondary metabolite biosynthesis. Its function is as follows. FAD-dependent monooxygenase; part of the gene cluster that mediates the biosynthesis of hancockiamides, an unusual new family of N-cinnamoylated piperazines. The NRPS hkm10 and the NmrA-like reductase hkm9 are proposed to convert two molecules of L-Phe to the intermediary piperazine called xenocockiamide A. Xenocockiamide A is then converted to hancockiamide D via a series of hydroxylations and O-methylations. The tyrosinase hkm6 may catalyze an aromatic hydroxylation, then the 2-oxoglutarate-dependent Fe(II) dioxygenase hkm4 and the FAD-dependent phenol hydroxylase hkm7 may catalyze consecutive hydroxylations to install 2 more hydroxy groups, and the methyltransferase hkm8 probably catalyzes two methylations using 2 molecules of S-adenosyl-L-methionine (SAM). The NRPS hkm11 activates and transfers trans-cinnamate supplied by the PAL hkm12 to hancockiamide D and produces hancockiamide A. NRPS Hkm11 has the flexibility to tolerate the bulky hancockiamide G as a substrate and the absence of the acetyl-transferase hkm3 opens up the opportunity for hkm11 to introduce a second N-cinnamoyl moiety. The cytochrome P450 monooxygenase hkm5 catalyzes the methylenedioxy bridge formation, converting hancockiamide A into hancockiamide G. Hkm5 can also convert hancockiamide B into hancockiamide C, and hancockiamide D into hancockiamide H. The N-acetyltransferase hkm3 finally transfers an acetyl group to 1-N of piperazine, converting hancockiamide A into hancockiamide B and hancockiamide G into hancockiamide C. The polypeptide is FAD-dependent monooxygenase hkm7 (Aspergillus hancockii).